The following is a 432-amino-acid chain: Adenylosuccinate synthetase (432 aa).

GTP-binding positions include 13-19 (GDEGKGK) and 41-43 (GHT). Catalysis depends on Asp14, which acts as the Proton acceptor. Residues Asp14 and Gly41 each coordinate Mg(2+). Residues 14-17 (DEGK), 39-42 (NAGH), Thr130, Arg144, Gln225, Thr240, and Arg304 contribute to the IMP site. The active-site Proton donor is the His42. Position 300–306 (300–306 (ATTGRRR)) interacts with substrate. GTP-binding positions include Arg306, 332 to 334 (KLD), and 415 to 417 (STG).

It belongs to the adenylosuccinate synthetase family. Homodimer. The cofactor is Mg(2+).

The protein resides in the cytoplasm. The catalysed reaction is IMP + L-aspartate + GTP = N(6)-(1,2-dicarboxyethyl)-AMP + GDP + phosphate + 2 H(+). Its pathway is purine metabolism; AMP biosynthesis via de novo pathway; AMP from IMP: step 1/2. Its function is as follows. Plays an important role in the de novo pathway of purine nucleotide biosynthesis. Catalyzes the first committed step in the biosynthesis of AMP from IMP. The polypeptide is Adenylosuccinate synthetase (Baumannia cicadellinicola subsp. Homalodisca coagulata).